The primary structure comprises 662 residues: Probable quinol oxidase subunit 1 (662 aa).

2 helical membrane-spanning segments follow: residues 14-34 (WMIT…IAVI) and 58-78 (IMYL…ALLI). Histidine 102 serves as a coordination point for Fe(II)-heme a. Helical transmembrane passes span 103–123 (GVIM…NIVV), 140–160 (VSFW…IIGG), 187–207 (IAIQ…FVTI), 228–248 (FITT…LALM), 273–293 (FFWV…FGIY), 311–331 (MVWA…HHFF), 336–356 (GALI…PTGV), and 376–396 (MLFS…GVML). Positions 279, 283, 328, and 329 each coordinate Cu cation. Residues 279–283 (HPEVY) constitute a cross-link (1'-histidyl-3'-tyrosine (His-Tyr)). Histidine 414 serves as a coordination point for heme a3. A run of 5 helical transmembrane segments spans residues 415-435 (FHYT…IFWY), 451-471 (CFWF…ILGL), 493-513 (ISTI…VSIV), 587-604 (PVGF…FFLI), and 608-627 (VIPA…YRSF). Position 416 (histidine 416) interacts with Fe(II)-heme a.

This sequence belongs to the heme-copper respiratory oxidase family. The cofactor is Cu cation. It depends on ferriheme a as a cofactor. Heme A3. serves as cofactor.

Its subcellular location is the cell membrane. The enzyme catalyses 2 a quinol + O2 = 2 a quinone + 2 H2O. It participates in energy metabolism; oxidative phosphorylation. Functionally, catalyzes quinol oxidation with the concomitant reduction of oxygen to water. This is Probable quinol oxidase subunit 1 (qoxB) from Staphylococcus aureus (strain MRSA252).